The primary structure comprises 343 residues: Geranylgeranyl pyrophosphate synthase (343 aa).

Residues 1–12 (MAYTVEPREHSK) are compositionally biased toward basic and acidic residues. The segment at 1–26 (MAYTVEPREHSKNTTLPTVAMPPSPP) is disordered. 3 residues coordinate isopentenyl diphosphate: lysine 69, arginine 72, and histidine 101. Positions 108 and 112 each coordinate Mg(2+). Arginine 117 contacts dimethylallyl diphosphate. Residue arginine 118 participates in isopentenyl diphosphate binding. Residues threonine 196 and glutamine 229 each contribute to the dimethylallyl diphosphate site. Residue aspartate 232 coordinates Mg(2+). Residues asparagine 236, lysine 246, and lysine 256 each contribute to the dimethylallyl diphosphate site.

Belongs to the FPP/GGPP synthase family. It depends on Mg(2+) as a cofactor.

It carries out the reaction isopentenyl diphosphate + dimethylallyl diphosphate = (2E)-geranyl diphosphate + diphosphate. The enzyme catalyses isopentenyl diphosphate + (2E)-geranyl diphosphate = (2E,6E)-farnesyl diphosphate + diphosphate. It catalyses the reaction isopentenyl diphosphate + (2E,6E)-farnesyl diphosphate = (2E,6E,10E)-geranylgeranyl diphosphate + diphosphate. The protein operates within mycotoxin biosynthesis. Functionally, geranylgeranyl pyrophosphate synthase; part of the gene cluster that mediates the biosynthesis of aphidicolin, a specific inhibitor of eukaryotic DNA synthesis and DNA polymerase alpha. The geranylgeranyl pyrophosphate synthase GGS is required for supplying a sufficient amount of geranylgeranyl diphosphate (GGDP), the general precursor of diterpenes. The diterpene synthase ACS then catalyzes the conversion of geranylgeranyl diphosphate to aphidicolan-16-beta-ol via the intermediate syn-copalyldiphosphate (syn-CDP). In addition to aphidicolan-16-beta-ol, the enzyme also produces low levels of amphidicol-15-ene and amphidicol-16-ene. The cytochrome P450 monooxygenase P450-2 then catalyzes the two-step hydroxylation from aphidicolan-16-beta-ol to 3-deoxyaphidicolin via a 17,3-deoxyaphidicolin intermediate. Finally, the cytochrome P450 monooxygenase P450-1 converts 3-deoxyaphidicolin to aphidicolin. This Neocamarosporium betae (Beet black rot fungus) protein is Geranylgeranyl pyrophosphate synthase (GGS).